A 1416-amino-acid polypeptide reads, in one-letter code: Telomere-associated protein RIF1 (1416 aa).

4 disordered regions span residues 789–858 (PIRK…PVVQ), 886–984 (PEVA…HLTG), 1021–1054 (ARAQ…QAPP), and 1166–1186 (TART…APEE). The span at 928 to 945 (GSSGDPAASAGAVAAGEM) shows a compositional bias: low complexity. A compositionally biased stretch (polar residues) spans 1029-1050 (QVSTPTSELNELTGTDHTSTPI).

It belongs to the RIF1 family. Highly divergent. As to quaternary structure, interacts with Pp1-87b. Interacts with SuUR (via SNF2-like region). Post-translationally, phosphorylated, probably by Cdk1; phosphorylation regulates dissociation from heterochromatin. Expressed in nurse cells and follicle cells in the adult female (at protein level). Detected in adult at extremely low levels.

It localises to the nucleus. The protein resides in the chromosome. It is found in the telomere. Its function is as follows. Regulates the timing of initiation of DNA replication. Functions in copy number control by promoting the underreplication of DNA, which is found in many late replicating euchromatic regions of salivary gland polytene chromosomes. Promotes underreplication by localizing to active DNA replication forks in a partially SuUR-dependent manner, and inhibiting replication fork progression. Might also work as an adapter to recruit Pp1-87B to multiple sites on the chromosome and may function with Pp1-87B to mediate underreplication. Plays an essential role in embryonic development, in the transition from larvae to pupae and, probably, in proliferating tissues later on. In embryos, during mid-blastula transition, binds to and selectively delays the replication of large blocks of repetitive DNA satellite sequences during S phase in response to the activity of Cdk1; maternal Rif1 is specifically required for the normal extension of S phase 14. Unlike mammalian orthologs, does not appear to play a role in DNA damage repair. The chain is Telomere-associated protein RIF1 from Drosophila melanogaster (Fruit fly).